The chain runs to 472 residues: 3-isopropylmalate dehydratase large subunit (472 aa).

[4Fe-4S] cluster is bound by residues cysteine 347, cysteine 407, and cysteine 410.

The protein belongs to the aconitase/IPM isomerase family. LeuC type 1 subfamily. As to quaternary structure, heterodimer of LeuC and LeuD. It depends on [4Fe-4S] cluster as a cofactor.

It catalyses the reaction (2R,3S)-3-isopropylmalate = (2S)-2-isopropylmalate. Its pathway is amino-acid biosynthesis; L-leucine biosynthesis; L-leucine from 3-methyl-2-oxobutanoate: step 2/4. Functionally, catalyzes the isomerization between 2-isopropylmalate and 3-isopropylmalate, via the formation of 2-isopropylmaleate. This Synechococcus sp. (strain CC9605) protein is 3-isopropylmalate dehydratase large subunit.